The following is a 200-amino-acid chain: Bombinin-like peptides 3 (200 aa).

The or 18 signal peptide spans 1 to 16; that stretch reads MNFKYIVAVSILIASA. Phe-68 and Phe-129 each carry phenylalanine amide.

It belongs to the bombinin family. As to expression, expressed by the skin glands.

It localises to the secreted. Has antimicrobial activity, but no hemolytic activity. Preference on killing Gram-negative non-enteric bacteria. This Bombina orientalis (Oriental fire-bellied toad) protein is Bombinin-like peptides 3.